An 832-amino-acid chain; its full sequence is Sodium/hydrogen exchanger 3 (832 aa).

An N-terminal signal peptide occupies residues 1 to 29 (MGRNRSGCVARCVSLTALVLLLCCPVVRS). The Extracellular portion of the chain corresponds to 30–66 (SEAETDPDSHTEHGDSHGGSREGNDTGFQIVTFRWEH). The disordered stretch occupies residues 31–51 (EAETDPDSHTEHGDSHGGSRE). Over residues 36–51 (PDSHTEHGDSHGGSRE) the composition is skewed to basic and acidic residues. A helical membrane pass occupies residues 67-89 (VQTPYVIALWILVASLGKIVFHL). Residues 90 to 97 (SEKVTSVV) are Cytoplasmic-facing. The chain crosses the membrane as a helical span at residues 98–117 (PESALLIVLGLILGGIVWAA). Over 118–126 (DHSASFTLT) the chain is Extracellular. A helical membrane pass occupies residues 127–144 (PTVFFFYLLPPIVLDAGY). Over 145-147 (FMP) the chain is Cytoplasmic. A helical transmembrane segment spans residues 148-183 (NRHFFGNLGTILTYAVIGTVWNAATTGLSLYGVFLL). A 1,2-diacyl-sn-glycero-3-phospho-(1D-myo-inositol)-binding residues include Gly-153, Gly-156, and Thr-157. Topologically, residues 184-196 (GLMGDLKAGLLEF) are extracellular. Residues 197-218 (LLFGSLIAAVDPVAVLAVFEEV) form a helical membrane-spanning segment. The Cytoplasmic segment spans residues 219–220 (HV). A helical membrane pass occupies residues 221-252 (NEVLFIIVFGESLLNDAVTVVLYNVFNSFVEV). Topologically, residues 253–259 (GAGNVQG) are extracellular. A helical membrane pass occupies residues 260–294 (LDYFKGIVSFFVVSLGGTAVGIIFAFILSLVTRFT). The Cytoplasmic segment spans residues 295–296 (KH). The chain crosses the membrane as a helical span at residues 297–319 (VRVIEPGFVFVISYLSYLTADML). Topologically, residues 320 to 321 (SL) are extracellular. A helical transmembrane segment spans residues 322–338 (SAILAITFCGICCQKYV). Over 339-345 (KANLCEQ) the chain is Cytoplasmic. Residues 346-374 (SITTVRYAMKMLASGAETIIFMFLGISAV) traverse the membrane as a helical segment. Over 375–382 (NPTIWTWN) the chain is Extracellular. The helical transmembrane segment at 383 to 404 (TAFILLTLVFISVYRVIGVVIQ) threads the bilayer. Topologically, residues 405–417 (TWILNHYRVVQLE) are cytoplasmic. The helical transmembrane segment at 418–441 (IIDQVVMSYGGLRGAVAFALVVLL) threads the bilayer. Residues 442 to 448 (DSNYVGE) lie on the Extracellular side of the membrane. A helical membrane pass occupies residues 449–482 (RRLFVSTTIIVVYFTVIFQGLTIKPLVKWLKVKR). Over 483–832 (SQHKEPLLNE…PLSFLPESSM (350 aa)) the chain is Cytoplasmic. A 1,2-diacyl-sn-glycero-3-phospho-(1D-myo-inositol) is bound by residues Gln-512, Ile-513, and His-515. The segment at 740–760 (TPASNDADETGTGIDNPSFSN) is disordered.

The protein belongs to the monovalent cation:proton antiporter 1 (CPA1) transporter (TC 2.A.36) family. In terms of assembly, homodimer. Detected in early distal renal tubules in the kidney bundle zone, in proximal and late distal tubules in the kidney sinus zone, in absorptive epithelial cells of the intestine and in rectal epithelium (at protein level). Isoform 1 is expressed strongly in the gills, at intermediate levels in the kidney, spleen, rectum, spiral intestine and skin, and weakly in the brain, blood and rectal gland. Isoform 2 is expressed strongly in the kidney, rectum and spiral intestine, and weakly in muscles and the rectal gland.

It is found in the apical cell membrane. It localises to the cell membrane. Its subcellular location is the recycling endosome membrane. The protein localises to the early endosome membrane. It carries out the reaction Na(+)(in) + H(+)(out) = Na(+)(out) + H(+)(in). Its activity is regulated as follows. Seems to switch between active and inactive modes in response to various stimuli. Activated directly or indirectly by membrane phosphatidylinositol (PIs). Regulated by a variety of auxiliary proteins, which facilitate the maturation, cell surface expression and function of the transporter. Inhibited specifically by the drug tenapanor. Functionally, plasma membrane Na(+)/H(+) antiporter. Exchanges intracellular H(+) ions for extracellular Na(+) in 1:1 stoichiometry, playing a key role in salt and fluid absorption and pH homeostasis. Major apical Na(+)/H(+) exchanger in kidney and intestine playing an important role in renal and intestine Na(+) absorption and blood pressure regulation. This Triakis scyllium (Banded houndshark) protein is Sodium/hydrogen exchanger 3.